We begin with the raw amino-acid sequence, 53 residues long: UPF0391 membrane protein YtjA (53 aa).

2 consecutive transmembrane segments (helical) span residues 4 to 24 and 30 to 48; these read WGII…GGLA and AAKI…SLFM.

Belongs to the UPF0391 family.

It is found in the cell membrane. The chain is UPF0391 membrane protein YtjA from Escherichia coli O6:K15:H31 (strain 536 / UPEC).